The following is a 769-amino-acid chain: Integrin beta-8 (769 aa).

The N-terminal stretch at 1-42 (MCGSALAFFTAAFVCLQNDRRGPASFLWAAWVFSLVLGLGQG) is a signal peptide. The Extracellular segment spans residues 43 to 684 (EDNRCASSNA…ECFSSPSYLR (642 aa)). Positions 46–95 (RCASSNAASCARCLALGPECGWCVQEDFISGGSRSERCDIVSNLISKGCS) constitute a PSI domain. Cystine bridges form between cysteine 47-cysteine 65, cysteine 55-cysteine 469, cysteine 58-cysteine 83, cysteine 68-cysteine 94, cysteine 211-cysteine 218, cysteine 266-cysteine 307, cysteine 407-cysteine 419, cysteine 439-cysteine 467, cysteine 471-cysteine 491, cysteine 471-cysteine 494, cysteine 481-cysteine 494, cysteine 499-cysteine 528, cysteine 511-cysteine 526, cysteine 520-cysteine 531, cysteine 533-cysteine 546, cysteine 553-cysteine 567, cysteine 561-cysteine 572, cysteine 574-cysteine 583, cysteine 585-cysteine 609, cysteine 593-cysteine 607, cysteine 601-cysteine 612, cysteine 614-cysteine 624, cysteine 627-cysteine 630, cysteine 634-cysteine 661, and cysteine 640-cysteine 657. The VWFA domain occupies 146–384 (PVDLYYLVDV…NLVVEAYQKL (239 aa)). Positions 154 and 156 each coordinate Mg(2+). Aspartate 193 is a Ca(2+) binding site. A glycan (N-linked (GlcNAc...) asparagine) is linked at asparagine 233. The Ca(2+) site is built by asparagine 249, aspartate 251, proline 253, and glutamate 254. Glutamate 254 provides a ligand contact to Mg(2+). N-linked (GlcNAc...) asparagine glycosylation occurs at asparagine 402. N-linked (GlcNAc...) asparagine glycosylation is found at asparagine 421, asparagine 431, asparagine 456, and asparagine 466. 4 I-EGF domains span residues 471–495 (CEDN…FQCD), 499–547 (CHFD…KYCE), 548–584 (KDDF…DRCQ), and 585–625 (CPSA…RFCE). The N-linked (GlcNAc...) asparagine glycan is linked to asparagine 648. Residues 685–704 (IFFIIFIVTFLIGLLKVLII) traverse the membrane as a helical segment. Residues 705 to 769 (RQVILQWNSN…NAHETFRCNF (65 aa)) lie on the Cytoplasmic side of the membrane.

Belongs to the integrin beta chain family. As to quaternary structure, heterodimer of an alpha and a beta subunit. Beta-8 (ITGB8) associates with alpha-V (ITGAV) to form ITGAV:ITGB8. ITGAV:ITGB8 interacts with TGFB1. In terms of tissue distribution, placenta, kidney, brain, ovary, uterus and in several transformed cells. Transiently expressed in 293 human embryonic kidney cells.

The protein localises to the cell membrane. Integrin alpha-V:beta-8 (ITGAV:ITGB8) is a receptor for fibronectin. It recognizes the sequence R-G-D in its ligands. Integrin alpha-V:beta-6 (ITGAV:ITGB6) mediates R-G-D-dependent release of transforming growth factor beta-1 (TGF-beta-1) from regulatory Latency-associated peptide (LAP), thereby playing a key role in TGF-beta-1 activation on the surface of activated regulatory T-cells (Tregs). Required during vasculogenesis. The polypeptide is Integrin beta-8 (Homo sapiens (Human)).